A 334-amino-acid polypeptide reads, in one-letter code: Phosphate acyltransferase (334 aa).

It belongs to the PlsX family. As to quaternary structure, homodimer. Probably interacts with PlsY.

The protein resides in the cytoplasm. The catalysed reaction is a fatty acyl-[ACP] + phosphate = an acyl phosphate + holo-[ACP]. It participates in lipid metabolism; phospholipid metabolism. In terms of biological role, catalyzes the reversible formation of acyl-phosphate (acyl-PO(4)) from acyl-[acyl-carrier-protein] (acyl-ACP). This enzyme utilizes acyl-ACP as fatty acyl donor, but not acyl-CoA. The sequence is that of Phosphate acyltransferase from Halothermothrix orenii (strain H 168 / OCM 544 / DSM 9562).